The chain runs to 892 residues: Alanine--tRNA ligase (892 aa).

Zn(2+)-binding residues include His577, His581, Cys680, and His684.

Belongs to the class-II aminoacyl-tRNA synthetase family. The cofactor is Zn(2+).

It localises to the cytoplasm. It carries out the reaction tRNA(Ala) + L-alanine + ATP = L-alanyl-tRNA(Ala) + AMP + diphosphate. In terms of biological role, catalyzes the attachment of alanine to tRNA(Ala) in a two-step reaction: alanine is first activated by ATP to form Ala-AMP and then transferred to the acceptor end of tRNA(Ala). Also edits incorrectly charged Ser-tRNA(Ala) and Gly-tRNA(Ala) via its editing domain. The sequence is that of Alanine--tRNA ligase from Arthrobacter sp. (strain FB24).